The sequence spans 179 residues: UPF0302 protein YpiB (179 aa).

The protein belongs to the UPF0302 family.

The sequence is that of UPF0302 protein YpiB (ypiB) from Bacillus subtilis (strain 168).